The chain runs to 210 residues: UMP-CMP kinase 3 (210 aa).

34–39 (GSGKGT) contacts ATP. An NMP region spans residues 54 to 83 (SAGDLLRAEIKSGSENGTMIENMIKEGKIV). Residues arginine 60, 81–83 (KIV), and 108–111 (GFPR) contribute to the a ribonucleoside 5'-phosphate site. Asparagine 115 serves as a coordination point for CMP. The segment at 146-154 (GRNQGRVDD) is LID. An ATP-binding site is contributed by arginine 147. The a ribonucleoside 5'-phosphate site is built by arginine 151 and arginine 162. Position 190 (lysine 190) interacts with ATP.

This sequence belongs to the adenylate kinase family. UMP-CMP kinase subfamily. Monomer. The cofactor is Mg(2+).

Its subcellular location is the cytoplasm. It is found in the nucleus. It carries out the reaction UMP + ATP = UDP + ADP. It catalyses the reaction CMP + ATP = CDP + ADP. The enzyme catalyses dCMP + ATP = dCDP + ADP. In terms of biological role, catalyzes the phosphorylation of pyrimidine nucleoside monophosphates at the expense of ATP. Plays an important role in de novo pyrimidine nucleotide biosynthesis. Has preference for UMP and CMP as phosphate acceptors. In Oryza sativa subsp. japonica (Rice), this protein is UMP-CMP kinase 3 (URA6).